Reading from the N-terminus, the 312-residue chain is Malate dehydrogenase (312 aa).

Residues 7–13 (GAAGGIG) and aspartate 34 each bind NAD(+). The substrate site is built by arginine 81 and arginine 87. Residues asparagine 94 and 117 to 119 (ITN) contribute to the NAD(+) site. Residues asparagine 119 and arginine 153 each coordinate substrate. The Proton acceptor role is filled by histidine 177. Methionine 227 provides a ligand contact to NAD(+).

Belongs to the LDH/MDH superfamily. MDH type 1 family. As to quaternary structure, homodimer.

It carries out the reaction (S)-malate + NAD(+) = oxaloacetate + NADH + H(+). Its function is as follows. Catalyzes the reversible oxidation of malate to oxaloacetate. This is Malate dehydrogenase from Pectobacterium carotovorum subsp. carotovorum (strain PC1).